Reading from the N-terminus, the 363-residue chain is MLETKINLGKVTYPLYMGRNLLDNLDVLIEDHIEGKTVFLLTEDNVFKYYGNPLLEKLKSSRFKYHIIESGETSKSIDTYGEIIHELTENKQDRDTIILALGGGVIGDLGGFVASTYMRGVDLIHIPTTLLAQIDSSIGGKTGINFGAIKNLLGTFYHPRAVYMDLSTLDTLPKREYIAAFGEIIKYGLIGDYDLLLDLDQHHRAYLDRTRSVDDLILKCIRMKENIVLKDERDSGMRQVLNLGHTFAHGLESSTNFQKFLHGEAVALGLIFASNLSLKLKFIAEEYHQFVNQLIYKYFSDRYILQLDTEGIVEAMTMDKKNKEHRITFILPVDKEKVEIFKNIPIEIVEESLEEIKYGFRCK.

NAD(+) contacts are provided by residues 70–75 (SGETSK), 104–108 (GVIGD), 128–129 (TT), Lys-141, Lys-150, and 168–171 (TLDT). Zn(2+) contacts are provided by Glu-183, His-245, and His-262.

It belongs to the sugar phosphate cyclases superfamily. Dehydroquinate synthase family. Requires Co(2+) as cofactor. It depends on Zn(2+) as a cofactor. The cofactor is NAD(+).

Its subcellular location is the cytoplasm. It carries out the reaction 7-phospho-2-dehydro-3-deoxy-D-arabino-heptonate = 3-dehydroquinate + phosphate. It participates in metabolic intermediate biosynthesis; chorismate biosynthesis; chorismate from D-erythrose 4-phosphate and phosphoenolpyruvate: step 2/7. Functionally, catalyzes the conversion of 3-deoxy-D-arabino-heptulosonate 7-phosphate (DAHP) to dehydroquinate (DHQ). The protein is 3-dehydroquinate synthase of Alkaliphilus oremlandii (strain OhILAs) (Clostridium oremlandii (strain OhILAs)).